The following is a 449-amino-acid chain: UDP-N-acetylmuramate--L-alanine ligase (449 aa).

121 to 127 contributes to the ATP binding site; it reads GAHGKSS.

Belongs to the MurCDEF family.

The protein localises to the cytoplasm. It carries out the reaction UDP-N-acetyl-alpha-D-muramate + L-alanine + ATP = UDP-N-acetyl-alpha-D-muramoyl-L-alanine + ADP + phosphate + H(+). It functions in the pathway cell wall biogenesis; peptidoglycan biosynthesis. In terms of biological role, cell wall formation. The protein is UDP-N-acetylmuramate--L-alanine ligase of Helicobacter pylori (strain ATCC 700392 / 26695) (Campylobacter pylori).